Consider the following 20-residue polypeptide: Elastase (20 aa).

Residues 1–20 enclose the Peptidase S1 domain; the sequence is VVGGEVARAHSWPWQISLQY.

The protein belongs to the peptidase S1 family. Elastase subfamily.

Its function is as follows. Digests most rapidly at the C-terminal side of alanine residues, but also cleaves at valine and leucine residues. In Gadus morhua (Atlantic cod), this protein is Elastase.